The following is a 274-amino-acid chain: Pyrroline-5-carboxylate reductase 3 (274 aa).

The protein belongs to the pyrroline-5-carboxylate reductase family. Homodecamer; composed of 5 homodimers.

The protein resides in the cytoplasm. The enzyme catalyses L-proline + NADP(+) = (S)-1-pyrroline-5-carboxylate + NADPH + 2 H(+). The catalysed reaction is L-proline + NAD(+) = (S)-1-pyrroline-5-carboxylate + NADH + 2 H(+). Its pathway is amino-acid biosynthesis; L-proline biosynthesis; L-proline from L-glutamate 5-semialdehyde: step 1/1. Oxidoreductase that catalyzes the last step in proline biosynthesis, which corresponds to the reduction of pyrroline-5-carboxylate (P5C) to L-proline using NAD(P)H. Proline is synthesized from either glutamate or ornithine; both are converted to P5C, and then to proline via pyrroline-5-carboxylate reductases (PYCRs). PYCR3 is exclusively linked to the biosynthesis of proline from ornithine. This is Pyrroline-5-carboxylate reductase 3 from Xenopus laevis (African clawed frog).